A 194-amino-acid polypeptide reads, in one-letter code: uncharacterized protein (194 aa).

Disordered regions lie at residues 52–71 (KGRT…EKYK) and 86–194 (AEAL…DGGS). 3 stretches are compositionally biased toward polar residues: residues 53 to 63 (GRTTQSAINSE), 98 to 111 (ALTS…SSTN), and 119 to 132 (IAHS…TSPA). Residues 133 to 169 (NRHRRKEKERTRSNHRHGSHRRHEPYRTHLSRHHRHS) are compositionally biased toward basic residues. The span at 175-194 (SKRDDRYERRREHSPNDGGS) shows a compositional bias: basic and acidic residues.

This is an uncharacterized protein from Schizosaccharomyces pombe (strain 972 / ATCC 24843) (Fission yeast).